A 173-amino-acid chain; its full sequence is Co-chaperone protein HscB (173 aa).

The region spanning 2–74 is the J domain; that stretch reads DYFTLFGLPA…LKRAEYMLSQ (73 aa).

It belongs to the HscB family. In terms of assembly, interacts with HscA and stimulates its ATPase activity. Interacts with IscU.

Functionally, co-chaperone involved in the maturation of iron-sulfur cluster-containing proteins. Seems to help targeting proteins to be folded toward HscA. The chain is Co-chaperone protein HscB from Xenorhabdus nematophila (strain ATCC 19061 / DSM 3370 / CCUG 14189 / LMG 1036 / NCIMB 9965 / AN6).